The primary structure comprises 264 residues: DNA-binding HTH-type transcriptional repressor TrmBL2 (264 aa).

Residues 81–113 (LEKFIEEWQERVKEELEAKKKAKEELIELMKPL) adopt a coiled-coil conformation.

This sequence belongs to the transcriptional regulator TrmB family.

The protein localises to the cytoplasm. The protein resides in the chromosome. Functionally, an abundant chromosomal protein that seems to be involved in both genome architecture and transcription repression. Incubation with DNA in vitro gives fibrous structures 14.2 +/- 2.1 nm in thickness (naked DNA is 1.83 +/- 0.37 nm); does not significantly compact DNA. Binds to both coding and non-coding regions; binding within gene promoters correlates with decreased transcript levels, while binding within coding regions does not. This is DNA-binding HTH-type transcriptional repressor TrmBL2 from Thermococcus kodakarensis (strain ATCC BAA-918 / JCM 12380 / KOD1) (Pyrococcus kodakaraensis (strain KOD1)).